A 314-amino-acid chain; its full sequence is Protein YdgH (314 aa).

The N-terminal stretch at 1-19 (MKLKNTLLASALLSAMAFS) is a signal peptide.

This sequence to E.coli YjfY.

The protein is Protein YdgH (ydgH) of Escherichia coli (strain K12).